Here is a 1112-residue protein sequence, read N- to C-terminus: MPGVVMDNATVGGPRRASESPDNVSSTPFPQERVNQSGDSGDRRNRSIFHNGAVKGAQGPGQHIETHTGKDGINESEGLPELAHITQGFFPFSTLVNRSVQQCWNDLSELVTELAAIQVSPHGQMPSTPANGKAPGDQSPENLQKKTRILDFAHAKRAEFIKLLVLSQWSRQAGDVSRLIDLQNFIRNRHQAFMDALQRIGDMKRDLVQAQVANPDLKTALEVLSKGRVVSITDLGYEAPKQLTAKGALKRLHKINRIISARLALHDTIPRPFRTYRVHDGRATFVVQGEFELDLSVGEESKSSQFFFVDIRFLFSPSSHVPKGRLSNELDVQVNDRLRDNGLKGCFDFLHGLVLTNKITILFKQAVELARGLWSDVLRVELLHRTLVVQYWALKLGAKSWIEIGIKSGRKPHDVKDSGVPYLALRWIRDGQEVDSTSVEFDADDLSMERLLRSIIALHISHLLSATYSILNQRSLFATGLLSLQALLNTNEPGKCQLLAQLTVSRHLRVSIEPMSGAIVLSADPSPLDRSESDSSLEKSSVDDIVSRVSRLRCIAALEEAESTVKILGFETVSPRGLKADVRKILPPNILRFALFWHPFWDRSWIVAATSSTDGDSWWVIHLRRPSALATSALNLDKDIHREATVCSGHVISNTFLAVQHLARDSSFADLSHCLSGMVAIHANASYLADLRSVAFQPPLRALKFESGLEVPNLLVRYQVSTLPRALQLVFPAGVGKKDFIRNTVRVAFHGIDQRRKVVIFVAYGNLLVPMKELSTLVSKLDGSLVFKQEGDSFAIRLLAPAGQPVIVQLFESLQRLECMLSIFEFLRRKKLVIRSLSLSQVAFAYGPRRSLAAVMDIGMSKLSNSEQLDPVDILARTDPLLLLRLGIRFDHSNPHRRIQGSLAAILNHTSNKAALDSVAEILSFTLPAMRTLDQITSNLSRGEPARLQVVVRNAFTFLLHYINYALRFELTASQHAGRLTWVLRESGDPQVGPGQDQIRAKLRDTLYNSNGNGWKGLGNGVVADVEGVCSVISNLDTSFAGARDNQETSGDVKPTERSLNQTDVKNHRDHDFDAQAAMDYDTSAVATNSAGARSSQQCDAPPEAADVITID.

Disordered regions lie at residues 1 to 76, 120 to 141, and 1088 to 1112; these read MPGV…INES, SPHG…QSPE, and TNSA…ITID. Residues 20-39 show a composition bias toward polar residues; the sequence is SPDNVSSTPFPQERVNQSGD. Residues 64–73 are compositionally biased toward basic and acidic residues; the sequence is IETHTGKDGI. Polar residues predominate over residues 1088-1099; sequence TNSAGARSSQQC.

The protein belongs to the Mediator complex subunit 14 family. As to quaternary structure, component of the Mediator complex.

It localises to the nucleus. Its function is as follows. Component of the Mediator complex, a coactivator involved in the regulated transcription of nearly all RNA polymerase II-dependent genes. Mediator functions as a bridge to convey information from gene-specific regulatory proteins to the basal RNA polymerase II transcription machinery. Mediator is recruited to promoters by direct interactions with regulatory proteins and serves as a scaffold for the assembly of a functional preinitiation complex with RNA polymerase II and the general transcription factors. In Aspergillus clavatus (strain ATCC 1007 / CBS 513.65 / DSM 816 / NCTC 3887 / NRRL 1 / QM 1276 / 107), this protein is Mediator of RNA polymerase II transcription subunit 14 (rgr1).